Reading from the N-terminus, the 359-residue chain is Large ribosomal subunit protein bL27m (359 aa).

A mitochondrion-targeting transit peptide spans 1 to 24; sequence MSFWKVATLWQMPLRPSILVQVRT. The disordered stretch occupies residues 29 to 48; that stretch reads AAGSRTSMKDSAGRRLGPKK. A compositionally biased stretch (basic and acidic residues) spans 35 to 48; that stretch reads SMKDSAGRRLGPKK.

It belongs to the bacterial ribosomal protein bL27 family.

Its subcellular location is the mitochondrion. Functionally, component of the large subunit of mitochondrial ribosome. The chain is Large ribosomal subunit protein bL27m (MRPL2) from Eremothecium gossypii (strain ATCC 10895 / CBS 109.51 / FGSC 9923 / NRRL Y-1056) (Yeast).